A 579-amino-acid polypeptide reads, in one-letter code: Adenine deaminase (579 aa).

The protein belongs to the metallo-dependent hydrolases superfamily. Adenine deaminase family. Mn(2+) serves as cofactor.

The catalysed reaction is adenine + H2O + H(+) = hypoxanthine + NH4(+). The sequence is that of Adenine deaminase from Listeria innocua serovar 6a (strain ATCC BAA-680 / CLIP 11262).